Reading from the N-terminus, the 307-residue chain is Aspartate carbamoyltransferase catalytic subunit (307 aa).

Positions 54 and 55 each coordinate carbamoyl phosphate. Residue Lys-83 participates in L-aspartate binding. Arg-104, His-132, and Gln-135 together coordinate carbamoyl phosphate. L-aspartate-binding residues include Arg-165 and Arg-228. Carbamoyl phosphate is bound by residues Leu-267 and Pro-268.

The protein belongs to the aspartate/ornithine carbamoyltransferase superfamily. ATCase family. As to quaternary structure, heterododecamer (2C3:3R2) of six catalytic PyrB chains organized as two trimers (C3), and six regulatory PyrI chains organized as three dimers (R2).

It catalyses the reaction carbamoyl phosphate + L-aspartate = N-carbamoyl-L-aspartate + phosphate + H(+). It functions in the pathway pyrimidine metabolism; UMP biosynthesis via de novo pathway; (S)-dihydroorotate from bicarbonate: step 2/3. Catalyzes the condensation of carbamoyl phosphate and aspartate to form carbamoyl aspartate and inorganic phosphate, the committed step in the de novo pyrimidine nucleotide biosynthesis pathway. In Clostridium botulinum (strain Okra / Type B1), this protein is Aspartate carbamoyltransferase catalytic subunit.